A 440-amino-acid chain; its full sequence is Light-independent protochlorophyllide reductase subunit N (440 aa).

The tract at residues 1–24 (MTCRPALSDSHPPEPGTPSSPSFG) is disordered. Positions 42, 67, and 128 each coordinate [4Fe-4S] cluster.

It belongs to the BchN/ChlN family. As to quaternary structure, protochlorophyllide reductase is composed of three subunits; BchL, BchN and BchB. Forms a heterotetramer of two BchB and two BchN subunits. [4Fe-4S] cluster serves as cofactor.

It carries out the reaction chlorophyllide a + oxidized 2[4Fe-4S]-[ferredoxin] + 2 ADP + 2 phosphate = protochlorophyllide a + reduced 2[4Fe-4S]-[ferredoxin] + 2 ATP + 2 H2O. It functions in the pathway porphyrin-containing compound metabolism; bacteriochlorophyll biosynthesis (light-independent). In terms of biological role, component of the dark-operative protochlorophyllide reductase (DPOR) that uses Mg-ATP and reduced ferredoxin to reduce ring D of protochlorophyllide (Pchlide) to form chlorophyllide a (Chlide). This reaction is light-independent. The NB-protein (BchN-BchB) is the catalytic component of the complex. In Rhodospirillum rubrum (strain ATCC 11170 / ATH 1.1.1 / DSM 467 / LMG 4362 / NCIMB 8255 / S1), this protein is Light-independent protochlorophyllide reductase subunit N.